A 202-amino-acid polypeptide reads, in one-letter code: Putative pituitary tumor-transforming gene 3 protein (202 aa).

The short motif at 61–64 is the D-box element; the sequence is RKAL. The segment at 67-92 is disordered; the sequence is VNRATEKSVKTNGPLKQKQPSFSAKK. The SH3-binding signature appears at 163–173; the sequence is PPLPLKMPSPP.

This sequence belongs to the securin family.

The protein localises to the cytoplasm. It is found in the nucleus. This Pongo pygmaeus (Bornean orangutan) protein is Putative pituitary tumor-transforming gene 3 protein (PTTG3).